The sequence spans 644 residues: 1-deoxy-D-xylulose-5-phosphate synthase (644 aa).

Thiamine diphosphate contacts are provided by residues His78 and 120 to 122 (GHA). Asp149 serves as a coordination point for Mg(2+). Residues 150 to 151 (AA), Asn178, and Glu373 each bind thiamine diphosphate. Residue Asn178 coordinates Mg(2+).

The protein belongs to the transketolase family. DXPS subfamily. In terms of assembly, homodimer. Mg(2+) serves as cofactor. It depends on thiamine diphosphate as a cofactor.

The catalysed reaction is D-glyceraldehyde 3-phosphate + pyruvate + H(+) = 1-deoxy-D-xylulose 5-phosphate + CO2. The protein operates within metabolic intermediate biosynthesis; 1-deoxy-D-xylulose 5-phosphate biosynthesis; 1-deoxy-D-xylulose 5-phosphate from D-glyceraldehyde 3-phosphate and pyruvate: step 1/1. In terms of biological role, catalyzes the acyloin condensation reaction between C atoms 2 and 3 of pyruvate and glyceraldehyde 3-phosphate to yield 1-deoxy-D-xylulose-5-phosphate (DXP). In Chlamydia abortus (strain DSM 27085 / S26/3) (Chlamydophila abortus), this protein is 1-deoxy-D-xylulose-5-phosphate synthase.